Consider the following 276-residue polypeptide: Large ribosomal subunit protein uL2 (276 aa).

Residues 224–276 (VMNPVDHPHGGGEGKAPIGRKSPMTPWGKPTLGFKTRKKKNKSDKFIIRRRKK) form a disordered region. The segment covering 258–276 (KTRKKKNKSDKFIIRRRKK) has biased composition (basic residues).

This sequence belongs to the universal ribosomal protein uL2 family. In terms of assembly, part of the 50S ribosomal subunit. Forms a bridge to the 30S subunit in the 70S ribosome.

In terms of biological role, one of the primary rRNA binding proteins. Required for association of the 30S and 50S subunits to form the 70S ribosome, for tRNA binding and peptide bond formation. It has been suggested to have peptidyltransferase activity; this is somewhat controversial. Makes several contacts with the 16S rRNA in the 70S ribosome. The protein is Large ribosomal subunit protein uL2 of Geobacillus sp. (strain WCH70).